Reading from the N-terminus, the 201-residue chain is Cell division protein SepF (201 aa).

Residues 27-38 are compositionally biased toward basic and acidic residues; that stretch reads VQERTSVQRDSR. Residues 27 to 99 are disordered; the sequence is VQERTSVQRD…PRVQNKDSVR (73 aa). Residues 43–54 show a composition bias toward polar residues; that stretch reads QEASQRSHMTNS. Positions 72 to 81 are enriched in basic and acidic residues; it reads NRQERQRVQR. Polar residues predominate over residues 83–92; it reads NAYQQATPRV.

Belongs to the SepF family. Homodimer. Interacts with FtsZ.

The protein localises to the cytoplasm. Cell division protein that is part of the divisome complex and is recruited early to the Z-ring. Probably stimulates Z-ring formation, perhaps through the cross-linking of FtsZ protofilaments. Its function overlaps with FtsA. This chain is Cell division protein SepF, found in Streptococcus agalactiae serotype V (strain ATCC BAA-611 / 2603 V/R).